A 50-amino-acid polypeptide reads, in one-letter code: Peroxiredoxin-6 (50 aa).

The Thioredoxin domain maps to aspartate 1 to arginine 50. The residue at position 3 (threonine 3) is a Phosphothreonine. Residue cysteine 6 is the Cysteine sulfenic acid (-SOH) intermediate; for peroxidase activity of the active site. Position 19 is an N6-acetyllysine (lysine 19). The active-site For phospholipase activity is the aspartate 28.

The protein belongs to the peroxiredoxin family. Prx6 subfamily. In terms of assembly, homodimer. Interacts with GSTP1; mediates PRDX6 glutathionylation and regeneration. Interacts with APEX1. Interacts with STH. May interact with FAM168B. May interact with HTR2A. Irreversibly inactivated by overoxidation of Cys-6 to sulfinic acid (Cys-SO(2)H) and sulfonic acid (Cys-SO(3)H) forms upon oxidative stress. Post-translationally, phosphorylation at Thr-177 by MAP kinases increases the phospholipase activity of the enzyme. The phosphorylated form exhibits a greater lysophosphatidylcholine acyltransferase activity compared to the non-phosphorylated form.

It is found in the cytoplasm. The protein resides in the lysosome. It carries out the reaction a hydroperoxide + 2 glutathione = an alcohol + glutathione disulfide + H2O. The enzyme catalyses a 1,2-diacyl-sn-glycero-3-phosphocholine + H2O = a 1-acyl-sn-glycero-3-phosphocholine + a fatty acid + H(+). It catalyses the reaction a 1-acyl-sn-glycero-3-phosphocholine + an acyl-CoA = a 1,2-diacyl-sn-glycero-3-phosphocholine + CoA. The catalysed reaction is 1-hexadecanoyl-sn-glycero-3-phosphocholine + hexadecanoyl-CoA = 1,2-dihexadecanoyl-sn-glycero-3-phosphocholine + CoA. It carries out the reaction 1,2-dihexadecanoyl-sn-glycero-3-phosphocholine + H2O = 1-hexadecanoyl-sn-glycero-3-phosphocholine + hexadecanoate + H(+). Its function is as follows. Thiol-specific peroxidase that catalyzes the reduction of hydrogen peroxide and organic hydroperoxides to water and alcohols, respectively. Can reduce H(2)O(2) and short chain organic, fatty acid, and phospholipid hydroperoxides. Also has phospholipase activity, and can therefore either reduce the oxidized sn-2 fatty acyl group of phospholipids (peroxidase activity) or hydrolyze the sn-2 ester bond of phospholipids (phospholipase activity). These activities are dependent on binding to phospholipids at acidic pH and to oxidized phospholipds at cytosolic pH. Plays a role in cell protection against oxidative stress by detoxifying peroxides and in phospholipid homeostasis. Exhibits acyl-CoA-dependent lysophospholipid acyltransferase which mediates the conversion of lysophosphatidylcholine (1-acyl-sn-glycero-3-phosphocholine or LPC) into phosphatidylcholine (1,2-diacyl-sn-glycero-3-phosphocholine or PC). Shows a clear preference for LPC as the lysophospholipid and for palmitoyl CoA as the fatty acyl substrate. The sequence is that of Peroxiredoxin-6 from Mesocricetus auratus (Golden hamster).